The primary structure comprises 151 residues: uncharacterized protein (151 aa).

Helical transmembrane passes span 14-34, 45-65, and 91-111; these read GAAL…YWLI, ISLV…GYLI, and VIVA…ASLI.

It localises to the cell membrane. This is an uncharacterized protein from Bacillus subtilis (strain 168).